Here is a 205-residue protein sequence, read N- to C-terminus: Small ribosomal subunit protein uS4 (205 aa).

The interval 1–46 is disordered; sequence MSKRHSAKYKIDRRMGENLWGRPKSPVNQRSYGPGQHGQRRKQKVS. The region spanning 94-154 is the S4 RNA-binding domain; it reads SRLDAIVYRA…EKSRNMALVL (61 aa).

This sequence belongs to the universal ribosomal protein uS4 family. Part of the 30S ribosomal subunit. Contacts protein S5. The interaction surface between S4 and S5 is involved in control of translational fidelity.

Functionally, one of the primary rRNA binding proteins, it binds directly to 16S rRNA where it nucleates assembly of the body of the 30S subunit. With S5 and S12 plays an important role in translational accuracy. The chain is Small ribosomal subunit protein uS4 from Caulobacter sp. (strain K31).